A 161-amino-acid chain; its full sequence is Phosphopantetheine adenylyltransferase (161 aa).

S10 provides a ligand contact to substrate. ATP is bound by residues 10 to 11 (SF) and H18. The substrate site is built by K42, L74, and R88. ATP-binding positions include 88–89 (RG), E99, and 124–130 (YSFLSSS).

This sequence belongs to the bacterial CoaD family. Homohexamer. Mg(2+) serves as cofactor.

The protein resides in the cytoplasm. It carries out the reaction (R)-4'-phosphopantetheine + ATP + H(+) = 3'-dephospho-CoA + diphosphate. Its pathway is cofactor biosynthesis; coenzyme A biosynthesis; CoA from (R)-pantothenate: step 4/5. Reversibly transfers an adenylyl group from ATP to 4'-phosphopantetheine, yielding dephospho-CoA (dPCoA) and pyrophosphate. This is Phosphopantetheine adenylyltransferase from Bacillus subtilis (strain 168).